Consider the following 94-residue polypeptide: Putative defensin-like protein 88 (94 aa).

The first 26 residues, 1-26 (MATQKFSYFLLVLLMVFALILPSIIS), serve as a signal peptide directing secretion. 3 disulfides stabilise this stretch: Cys-32–Cys-72, Cys-38–Cys-59, and Cys-48–Cys-71.

This sequence belongs to the DEFL family.

Its subcellular location is the secreted. The chain is Putative defensin-like protein 88 from Arabidopsis thaliana (Mouse-ear cress).